A 1320-amino-acid chain; its full sequence is FERM and PDZ domain-containing protein 4 (1320 aa).

A WW domain is found at 33–66 (QVPPYGWEMMTNRDGRDYFINHMTQAIPFDDPRF). A PDZ domain is found at 78–155 (KVEMRRDPVL…SILLTVIQPY (78 aa)). An FERM domain is found at 204 to 519 (NVLKVYLENG…GYYRLLVDSR (316 aa)). Disordered stretches follow at residues 809 to 847 (APPP…EIPV), 897 to 927 (YSPE…QKQS), 949 to 981 (TEFP…PPKV), 1024 to 1050 (KRKS…QQGT), 1114 to 1139 (PRGP…ADDA), and 1204 to 1274 (GHFS…ATFE). Residues 900–913 (ESSSDSGNETNSSE) are compositionally biased toward low complexity. A compositionally biased stretch (polar residues) spans 1204–1217 (GHFSLQSSQGSSVD). The span at 1223–1232 (GSSSSACATP) shows a compositional bias: low complexity.

In terms of assembly, interacts (via C-terminus) with DLG1, DLG2, DLG3 and DLG4/PSD95. Interacts (via N-terminus) with ARHGEF7; the interaction is mediated by the PDZ domain. Interacts with GPSM2 (via TPR repeat region). In terms of tissue distribution, expressed in various regions of the brain, including cortex, hippocampus, cerebellum, olfactory bulb and medial habenular nucleus.

Its subcellular location is the cell projection. The protein resides in the dendritic spine. Functionally, positive regulator of dendritic spine morphogenesis and density. Required for the maintenance of excitatory synaptic transmission. Binds phosphatidylinositol 4,5-bisphosphate. The chain is FERM and PDZ domain-containing protein 4 (Frmpd4) from Mus musculus (Mouse).